Consider the following 391-residue polypeptide: NAD(P)H-quinone oxidoreductase subunit H, chloroplastic (391 aa).

This sequence belongs to the complex I 49 kDa subunit family. NDH is composed of at least 16 different subunits, 5 of which are encoded in the nucleus.

The protein resides in the plastid. Its subcellular location is the chloroplast thylakoid membrane. It catalyses the reaction a plastoquinone + NADH + (n+1) H(+)(in) = a plastoquinol + NAD(+) + n H(+)(out). It carries out the reaction a plastoquinone + NADPH + (n+1) H(+)(in) = a plastoquinol + NADP(+) + n H(+)(out). In terms of biological role, NDH shuttles electrons from NAD(P)H:plastoquinone, via FMN and iron-sulfur (Fe-S) centers, to quinones in the photosynthetic chain and possibly in a chloroplast respiratory chain. The immediate electron acceptor for the enzyme in this species is believed to be plastoquinone. Couples the redox reaction to proton translocation, and thus conserves the redox energy in a proton gradient. This Mesostigma viride (Green alga) protein is NAD(P)H-quinone oxidoreductase subunit H, chloroplastic.